The following is a 426-amino-acid chain: 3-phosphoshikimate 1-carboxyvinyltransferase (426 aa).

3 residues coordinate 3-phosphoshikimate: K22, S23, and R27. K22 contributes to the phosphoenolpyruvate binding site. Positions 96 and 124 each coordinate phosphoenolpyruvate. 3-phosphoshikimate is bound by residues S170, S171, Q172, S198, D314, N337, and K341. Q172 lines the phosphoenolpyruvate pocket. Residue D314 is the Proton acceptor of the active site. The phosphoenolpyruvate site is built by R345, R387, and K412.

It belongs to the EPSP synthase family. In terms of assembly, monomer.

It is found in the cytoplasm. The catalysed reaction is 3-phosphoshikimate + phosphoenolpyruvate = 5-O-(1-carboxyvinyl)-3-phosphoshikimate + phosphate. It functions in the pathway metabolic intermediate biosynthesis; chorismate biosynthesis; chorismate from D-erythrose 4-phosphate and phosphoenolpyruvate: step 6/7. Its function is as follows. Catalyzes the transfer of the enolpyruvyl moiety of phosphoenolpyruvate (PEP) to the 5-hydroxyl of shikimate-3-phosphate (S3P) to produce enolpyruvyl shikimate-3-phosphate and inorganic phosphate. This is 3-phosphoshikimate 1-carboxyvinyltransferase from Shewanella baltica (strain OS195).